We begin with the raw amino-acid sequence, 640 residues long: Threonine--tRNA ligase (640 aa).

In terms of domain architecture, TGS spans 1–61 (MLVVTLPDGS…DKDSQLAIIT (61 aa)). Residues 242–533 (DHRRLGKQLD…LIENHTGNMP (292 aa)) are catalytic. The Zn(2+) site is built by C333, H384, and H510.

The protein belongs to the class-II aminoacyl-tRNA synthetase family. Homodimer. Zn(2+) is required as a cofactor.

It localises to the cytoplasm. The enzyme catalyses tRNA(Thr) + L-threonine + ATP = L-threonyl-tRNA(Thr) + AMP + diphosphate + H(+). In terms of biological role, catalyzes the attachment of threonine to tRNA(Thr) in a two-step reaction: L-threonine is first activated by ATP to form Thr-AMP and then transferred to the acceptor end of tRNA(Thr). Also edits incorrectly charged L-seryl-tRNA(Thr). This chain is Threonine--tRNA ligase, found in Polynucleobacter necessarius subsp. necessarius (strain STIR1).